A 305-amino-acid polypeptide reads, in one-letter code: Ribonuclease BN (305 aa).

Positions 64, 66, 68, 69, 141, 212, and 270 each coordinate Zn(2+). Residue Asp-68 is the Proton acceptor of the active site.

It belongs to the RNase Z family. RNase BN subfamily. Homodimer. Zn(2+) is required as a cofactor.

Zinc phosphodiesterase, which has both exoribonuclease and endoribonuclease activities. The sequence is that of Ribonuclease BN from Escherichia coli O81 (strain ED1a).